A 487-amino-acid polypeptide reads, in one-letter code: N-succinylglutamate 5-semialdehyde dehydrogenase (487 aa).

221–226 (GSSRTG) is an NAD(+) binding site. Catalysis depends on residues Glu244 and Cys278.

Belongs to the aldehyde dehydrogenase family. AstD subfamily.

The enzyme catalyses N-succinyl-L-glutamate 5-semialdehyde + NAD(+) + H2O = N-succinyl-L-glutamate + NADH + 2 H(+). Its pathway is amino-acid degradation; L-arginine degradation via AST pathway; L-glutamate and succinate from L-arginine: step 4/5. Its function is as follows. Catalyzes the NAD-dependent reduction of succinylglutamate semialdehyde into succinylglutamate. This chain is N-succinylglutamate 5-semialdehyde dehydrogenase, found in Pseudomonas putida (strain ATCC 700007 / DSM 6899 / JCM 31910 / BCRC 17059 / LMG 24140 / F1).